Consider the following 167-residue polypeptide: Leptin (167 aa).

A signal peptide spans 1-21; that stretch reads MYWRTLWGFLWLWPYLFYIQA. C117 and C167 are joined by a disulfide.

This sequence belongs to the leptin family.

Its subcellular location is the secreted. Functionally, key player in the regulation of energy balance and body weight control. Once released into the circulation, has central and peripheral effects by binding LEPR, found in many tissues, which results in the activation of several major signaling pathways. In the hypothalamus, acts as an appetite-regulating factor that induces a decrease in food intake and an increase in energy consumption by inducing anorexinogenic factors and suppressing orexigenic neuropeptides, also regulates bone mass and secretion of hypothalamo-pituitary-adrenal hormones. In the periphery, increases basal metabolism, influences reproductive function, regulates pancreatic beta-cell function and insulin secretion, is pro-angiogenic for endothelial cell and affects innate and adaptive immunity. In the arcuate nucleus of the hypothalamus, activates by depolarization POMC neurons inducing FOS and SOCS3 expression to release anorexigenic peptides and inhibits by hyperpolarization NPY neurons inducing SOCS3 with a consequent reduction on release of orexigenic peptides. In addition to its known satiety inducing effect, has a modulatory role in nutrient absorption. In the intestine, reduces glucose absorption by enterocytes by activating PKC and leading to a sequential activation of p38, PI3K and ERK signaling pathways which exerts an inhibitory effect on glucose absorption. Acts as a growth factor on certain tissues, through the activation of different signaling pathways increases expression of genes involved in cell cycle regulation such as CCND1, via JAK2-STAT3 pathway, or VEGFA, via MAPK1/3 and PI3K-AKT1 pathways. May also play an apoptotic role via JAK2-STAT3 pathway and up-regulation of BIRC5 expression. Pro-angiogenic, has mitogenic activity on vascular endothelial cells and plays a role in matrix remodeling by regulating the expression of matrix metalloproteinases (MMPs) and tissue inhibitors of metalloproteinases (TIMPs). In innate immunity, modulates the activity and function of neutrophils by increasing chemotaxis and the secretion of oxygen radicals. Increases phagocytosis by macrophages and enhances secretion of pro-inflammatory mediators. Increases cytotoxic ability of NK cells. Plays a pro-inflammatory role, in synergy with IL1B, by inducing NOS2 which promotes the production of IL6, IL8 and Prostaglandin E2, through a signaling pathway that involves JAK2, PI3K, MAP2K1/MEK1 and MAPK14/p38. In adaptive immunity, promotes the switch of memory T-cells towards T helper-1 cell immune responses. Increases CD4(+)CD25(-) T-cell proliferation and reduces autophagy during TCR (T-cell receptor) stimulation, through MTOR signaling pathway activation and BCL2 up-regulation. In Macaca mulatta (Rhesus macaque), this protein is Leptin (LEP).